Reading from the N-terminus, the 90-residue chain is Small ribosomal subunit protein uS15c (90 aa).

Belongs to the universal ribosomal protein uS15 family. Part of the 30S ribosomal subunit.

The protein localises to the plastid. It localises to the chloroplast. This Buxus microphylla (Littleleaf boxwood) protein is Small ribosomal subunit protein uS15c (rps15).